The chain runs to 482 residues: O-phosphoseryl-tRNA(Sec) selenium transferase (482 aa).

The interval 1-36 (MKSSFGKKEGEYSRLVSKSSNKLLNSLWEKKQIPEE) is tetramerization. Position 69 (Arg69) interacts with pyridoxal 5'-phosphate. The phosphate loop (P-loop) stretch occupies residues 90–100 (GRSGNLLEIQP). Substrate contacts are provided by Arg91, Ser92, and Gln99. Lys277 bears the N6-(pyridoxal phosphate)lysine mark. Arg306 serves as a coordination point for substrate. Arg388 contributes to the tRNA binding site. Residues 461 to 482 (DRRGGSSGRRVPMNESFDMEND) are disordered.

The protein belongs to the SepSecS family. Homotetramer formed by a catalytic dimer and a non-catalytic dimer serving as a binding platform that orients tRNASec for catalysis. Each tetramer binds the CCA ends of two tRNAs which point to the active sites of the catalytic dimer. It depends on pyridoxal 5'-phosphate as a cofactor.

It is found in the cytoplasm. The catalysed reaction is O-phospho-L-seryl-tRNA(Sec) + selenophosphate + H2O = L-selenocysteinyl-tRNA(Sec) + 2 phosphate. The protein operates within aminoacyl-tRNA biosynthesis; selenocysteinyl-tRNA(Sec) biosynthesis; selenocysteinyl-tRNA(Sec) from L-seryl-tRNA(Sec) (archaeal/eukaryal route): step 2/2. In terms of biological role, converts O-phosphoseryl-tRNA(Sec) to selenocysteinyl-tRNA(Sec) required for selenoprotein biosynthesis. This Caenorhabditis briggsae protein is O-phosphoseryl-tRNA(Sec) selenium transferase (secs-1).